The primary structure comprises 390 residues: Branched-chain-amino-acid aminotransferase (390 aa).

Lys-225 is modified (N6-(pyridoxal phosphate)lysine).

The protein belongs to the class-IV pyridoxal-phosphate-dependent aminotransferase family. As to quaternary structure, homodimer. The cofactor is pyridoxal 5'-phosphate.

It catalyses the reaction L-leucine + 2-oxoglutarate = 4-methyl-2-oxopentanoate + L-glutamate. The catalysed reaction is L-isoleucine + 2-oxoglutarate = (S)-3-methyl-2-oxopentanoate + L-glutamate. It carries out the reaction L-valine + 2-oxoglutarate = 3-methyl-2-oxobutanoate + L-glutamate. In terms of biological role, catalyzes the first reaction in the catabolism of the essential branched chain amino acids leucine, isoleucine, and valine. This Monosiga brevicollis (Choanoflagellate) protein is Branched-chain-amino-acid aminotransferase.